The following is a 584-amino-acid chain: Transcriptional regulator STP2 (584 aa).

2 stretches are compositionally biased toward polar residues: residues M1 to K11 and A180 to D202. 2 disordered regions span residues M1–K22 and K161–S214. Residues S203–S214 are compositionally biased toward low complexity. The segment at F225 to H247 adopts a C2H2-type zinc-finger fold. 2 disordered regions span residues R381–P496 and Q553–F584. Low complexity predominate over residues S394–I407. Residues Q431–Q441 show a composition bias toward basic residues. A compositionally biased stretch (low complexity) spans N442–P480. Residues Q481–P496 are compositionally biased toward polar residues.

Proteolytically cleaved: activated by the amino acid-induced proteolytic removal of an N-terminal inhibitory domain.

Its subcellular location is the cell membrane. The protein resides in the nucleus. In terms of biological role, transcription factor involved in the regulation of gene expression in response to extracellular amino acid levels. Synthesized as latent cytoplasmic precursor, which, upon a signal initiated by the plasma membrane SPS amino acid sensor system (including CSY1 and CSH3), becomes proteolytically activated and relocates to the nucleus, where it induces the expression of SPS-sensor-regulated genes. Required for efficient alkalinization through the release of ammonia from the cells produced during the breakdown of amino acids, and subsequent switch to the hyphal form. The polypeptide is Transcriptional regulator STP2 (STP2) (Candida albicans (strain SC5314 / ATCC MYA-2876) (Yeast)).